The primary structure comprises 124 residues: Splicing factor 3B subunit 6-like protein (124 aa).

Residues 16-29 (EVNRVLYVRNLPFN) form an interaction with pre-mRNA branch site region. The region spanning 19 to 94 (RVLYVRNLPF…RYLIVLYYQH (76 aa)) is the RRM domain.

The protein resides in the nucleus. In terms of biological role, may be necessary for the splicing of pre-mRNA. The polypeptide is Splicing factor 3B subunit 6-like protein (Arabidopsis thaliana (Mouse-ear cress)).